The following is a 580-amino-acid chain: Protein O-linked-mannose beta-1,4-N-acetylglucosaminyltransferase 2 (580 aa).

Topologically, residues Met-1–Ser-4 are cytoplasmic. A helical; Signal-anchor for type II membrane protein transmembrane segment spans residues Ala-5 to Leu-25. Residues Arg-26 to Thr-580 lie on the Lumenal side of the membrane. Asn-99 and Asn-276 each carry an N-linked (GlcNAc...) asparagine glycan. The Fibronectin type-III domain occupies Ala-488–Thr-580.

This sequence belongs to the glycosyltransferase 61 family. Highly expressed in the brain, muscle, heart, and kidney in both fetus and adult. In the brain, highest expression in the cortex and cerebellum. Highly expressed in the pancreas.

It localises to the endoplasmic reticulum membrane. The catalysed reaction is 3-O-(alpha-D-mannosyl)-L-threonyl-[protein] + UDP-N-acetyl-alpha-D-glucosamine = 3-O-(N-acetyl-beta-D-glucosaminyl-(1-&gt;4)-alpha-D-mannosyl)-L-threonyl-[protein] + UDP + H(+). Its pathway is protein modification; protein glycosylation. Functionally, O-linked mannose beta-1,4-N-acetylglucosaminyltransferase that transfers UDP-N-acetyl-D-glucosamine to the 4-position of the mannose to generate N-acetyl-D-glucosamine-beta-1,4-O-D-mannosylprotein. Involved in the biosynthesis of the phosphorylated O-mannosyl trisaccharide (N-acetylgalactosamine-beta-3-N-acetylglucosamine-beta-4-(phosphate-6-)mannose), a carbohydrate structure present in alpha-dystroglycan (DAG1), which is required for binding laminin G-like domain-containing extracellular proteins with high affinity. The polypeptide is Protein O-linked-mannose beta-1,4-N-acetylglucosaminyltransferase 2 (POMGNT2) (Homo sapiens (Human)).